The following is a 753-amino-acid chain: Transcription factor SOX-30 (753 aa).

2 disordered regions span residues Met-1–Ala-45 and Ala-137–Arg-161. The span at Glu-7–Pro-23 shows a compositional bias: pro residues. Positions Val-337–Val-405 form a DNA-binding region, HMG box. Disordered stretches follow at residues Thr-514–Pro-575 and Pro-726–Leu-753. Composition is skewed to polar residues over residues Thr-531 to Gln-563 and Pro-726 to Thr-739.

Interacts with CTNNB1, competitively inhibiting CTNNB1-TCF7L2/TCF4 interaction.

Its subcellular location is the nucleus. The protein localises to the cytoplasm. Functionally, acts both as a transcriptional activator and a repressor. Binds to the DNA sequence 5'-ACAAT-3' and shows a preference for guanine residues surrounding this core motif. Binds to its own promoter and activates its own transcription. Required to activate the expression of postmeiotic genes involved in spermiogenesis. Binds to the promoter region of CTNNB1 and represses its transcription which leads to inhibition of Wnt signaling. Also inhibits Wnt signaling by binding to the CTNNB1 protein, preventing interaction of CTNNB1 with TCF7L2/TCF4. The sequence is that of Transcription factor SOX-30 (SOX30) from Homo sapiens (Human).